The primary structure comprises 110 residues: UPF0122 protein gbs1018 (110 aa).

It belongs to the UPF0122 family.

Might take part in the signal recognition particle (SRP) pathway. This is inferred from the conservation of its genetic proximity to ftsY/ffh. May be a regulatory protein. This chain is UPF0122 protein gbs1018, found in Streptococcus agalactiae serotype III (strain NEM316).